The primary structure comprises 472 residues: 3-isopropylmalate dehydratase large subunit (472 aa).

The [4Fe-4S] cluster site is built by Cys347, Cys407, and Cys410.

This sequence belongs to the aconitase/IPM isomerase family. LeuC type 1 subfamily. Heterodimer of LeuC and LeuD. [4Fe-4S] cluster serves as cofactor.

The catalysed reaction is (2R,3S)-3-isopropylmalate = (2S)-2-isopropylmalate. It participates in amino-acid biosynthesis; L-leucine biosynthesis; L-leucine from 3-methyl-2-oxobutanoate: step 2/4. In terms of biological role, catalyzes the isomerization between 2-isopropylmalate and 3-isopropylmalate, via the formation of 2-isopropylmaleate. In Synechococcus sp. (strain WH7803), this protein is 3-isopropylmalate dehydratase large subunit.